The chain runs to 248 residues: Phosphoglycerate mutase (248 aa).

Substrate-binding positions include 8–15, 21–22, R60, 87–90, K98, 114–115, and 183–184; these read RHGQSEWN, TG, ERHY, RR, and GN. H9 serves as the catalytic Tele-phosphohistidine intermediate. The active-site Proton donor/acceptor is E87.

This sequence belongs to the phosphoglycerate mutase family. BPG-dependent PGAM subfamily.

Its subcellular location is the cytoplasm. The enzyme catalyses (2R)-2-phosphoglycerate = (2R)-3-phosphoglycerate. It functions in the pathway carbohydrate degradation; glycolysis; pyruvate from D-glyceraldehyde 3-phosphate: step 3/5. The chain is Phosphoglycerate mutase (GPM1) from Candida albicans (strain SC5314 / ATCC MYA-2876) (Yeast).